We begin with the raw amino-acid sequence, 462 residues long: A-type ATP synthase subunit B (462 aa).

It belongs to the ATPase alpha/beta chains family. In terms of assembly, has multiple subunits with at least A(3), B(3), C, D, E, F, H, I and proteolipid K(x).

It localises to the cell membrane. Its function is as follows. Component of the A-type ATP synthase that produces ATP from ADP in the presence of a proton gradient across the membrane. The B chain is a regulatory subunit. This Pyrococcus furiosus (strain ATCC 43587 / DSM 3638 / JCM 8422 / Vc1) protein is A-type ATP synthase subunit B.